Consider the following 411-residue polypeptide: Putative BMP-2-inducible kinase-like protein (411 aa).

Disordered regions lie at residues 1 to 87 (MIAP…TQDI), 215 to 280 (SQQQ…RVSQ), and 392 to 411 (QQSQPVELDPFGAAPFPSKQ). 2 stretches are compositionally biased toward basic and acidic residues: residues 8–18 (SSEEEGQKDEE) and 53–68 (EKRSSDSDYEQAKAKY). A coiled-coil region spans residues 47–71 (EDEEEEEKRSSDSDYEQAKAKYSDM). Composition is skewed to basic residues over residues 220–234 (VKQRSLQKLSSRQRR) and 243–258 (NGKRHHGTPTSKKKTL).

The sequence is that of Putative BMP-2-inducible kinase-like protein (BMP2KL) from Homo sapiens (Human).